A 91-amino-acid chain; its full sequence is Hepcidin-1 (91 aa).

Positions 1-24 are cleaved as a signal peptide; it reads MKLSNVFLAAVVILTCVCVFQITA. A propeptide spanning residues 25-64 is cleaved from the precursor; sequence VPFIQQVQDEHHVESEELQENQHLTEAEHRQTDPLVLFRT. 4 cysteine pairs are disulfide-bonded: Cys-73-Cys-89, Cys-76-Cys-79, Cys-77-Cys-85, and Cys-80-Cys-88.

The protein belongs to the hepcidin family.

It localises to the secreted. In terms of biological role, seems to act as a signaling molecule involved in the maintenance of iron homeostasis. Seems to be required in conjunction with HFE to regulate both intestinal iron absorption and iron storage in macrophages. May also have antimicrobial activity. The chain is Hepcidin-1 (hamp1) from Danio rerio (Zebrafish).